Here is a 1726-residue protein sequence, read N- to C-terminus: Probable serine/threonine-protein kinase roco4 (1726 aa).

LRR repeat units follow at residues 256 to 277 (KGKR…ITQM), 280 to 301 (HLVE…IQLL), 303 to 324 (SLRI…ICYL), and 326 to 347 (DLKI…VVQS). Residues 364-544 (KSETWNKVKL…KRLIHEAEKS (181 aa)) enclose the Roc domain. GTP contacts are provided by residues 377–384 (GQEGVGKT), 428–432 (DFGGQ), and 487–490 (THSD). A COR domain is found at 591 to 787 (AINSQKERYI…RTYWRNGVLL (197 aa)). Residues 800 to 881 (SKQQQLQQQQ…STLNSQQLIN (82 aa)) are compositionally biased toward low complexity. Positions 800 to 890 (SKQQQLQQQQ…NPSVSPLSST (91 aa)) are disordered. The region spanning 1026–1292 (IEYEKQIGKG…SYIVKELSEL (267 aa)) is the Protein kinase domain. Residues 1032-1040 (IGKGGFGLV) and Lys1055 each bind ATP. Catalysis depends on Asp1154, which acts as the Proton acceptor. Positions 1319-1331 (ASTSSNADDGSQT) are enriched in polar residues. Positions 1319–1385 (ASTSSNADDG…SSPSTSFINS (67 aa)) are disordered. A compositionally biased stretch (low complexity) spans 1332–1348 (NNNNNNNNNNNNNNNNN). A compositionally biased stretch (polar residues) spans 1349–1364 (SGSSIALSPSRSFEQQ). Positions 1365 to 1381 (TTTTTTTTTSPSSPSTS) are enriched in low complexity. WD repeat units follow at residues 1422-1461 (SVHK…LINE), 1463-1502 (KCPH…IVQQ), 1506-1546 (PHKG…KKHS), 1589-1627 (KHST…ELQK), 1633-1670 (AHHE…KPFT), and 1674-1714 (HHKQ…EKKT).

This sequence belongs to the protein kinase superfamily. TKL Ser/Thr protein kinase family. ROCO subfamily.

The enzyme catalyses L-seryl-[protein] + ATP = O-phospho-L-seryl-[protein] + ADP + H(+). The catalysed reaction is L-threonyl-[protein] + ATP = O-phospho-L-threonyl-[protein] + ADP + H(+). This is Probable serine/threonine-protein kinase roco4 (roco4) from Dictyostelium discoideum (Social amoeba).